A 216-amino-acid chain; its full sequence is Elongation factor Ts (216 aa).

The involved in Mg(2+) ion dislocation from EF-Tu stretch occupies residues 81–84 (TDFV).

The protein belongs to the EF-Ts family.

The protein resides in the cytoplasm. Functionally, associates with the EF-Tu.GDP complex and induces the exchange of GDP to GTP. It remains bound to the aminoacyl-tRNA.EF-Tu.GTP complex up to the GTP hydrolysis stage on the ribosome. This Geotalea uraniireducens (strain Rf4) (Geobacter uraniireducens) protein is Elongation factor Ts.